Reading from the N-terminus, the 527-residue chain is Probable bifunctional tRNA threonylcarbamoyladenosine biosynthesis protein (527 aa).

The kae1 stretch occupies residues 1–323 (MPDIMPDDGL…YRADEVEVAW (323 aa)). Histidine 110, histidine 114, and tyrosine 131 together coordinate Fe cation. L-threonylcarbamoyladenylate-binding positions include 131 to 135 (YASGA), aspartate 163, glycine 176, glutamate 180, and asparagine 256. Aspartate 284 contacts Fe cation. The Protein kinase domain occupies 333–527 (IGPHEGGVAR…HEVELRGRYL (195 aa)). ATP-binding positions include 340–348 (VARGAEAVV) and lysine 357. Aspartate 444 functions as the Proton acceptor; for kinase activity in the catalytic mechanism.

This sequence in the N-terminal section; belongs to the KAE1 / TsaD family. The protein in the C-terminal section; belongs to the protein kinase superfamily. Tyr protein kinase family. BUD32 subfamily. Component of the KEOPS complex that consists of Kae1, Bud32, Cgi121 and Pcc1; the whole complex dimerizes. It depends on Fe(2+) as a cofactor.

It localises to the cytoplasm. It carries out the reaction L-seryl-[protein] + ATP = O-phospho-L-seryl-[protein] + ADP + H(+). The enzyme catalyses L-threonyl-[protein] + ATP = O-phospho-L-threonyl-[protein] + ADP + H(+). The catalysed reaction is L-threonylcarbamoyladenylate + adenosine(37) in tRNA = N(6)-L-threonylcarbamoyladenosine(37) in tRNA + AMP + H(+). Its function is as follows. Required for the formation of a threonylcarbamoyl group on adenosine at position 37 (t(6)A37) in tRNAs that read codons beginning with adenine. Is a component of the KEOPS complex that is probably involved in the transfer of the threonylcarbamoyl moiety of threonylcarbamoyl-AMP (TC-AMP) to the N6 group of A37. The Kae1 domain likely plays a direct catalytic role in this reaction. The Bud32 domain probably displays kinase activity that regulates Kae1 function. The polypeptide is Probable bifunctional tRNA threonylcarbamoyladenosine biosynthesis protein (Methanoculleus marisnigri (strain ATCC 35101 / DSM 1498 / JR1)).